Reading from the N-terminus, the 344-residue chain is DnaJ homolog subfamily C member 25 (344 aa).

The helical transmembrane segment at 5 to 25 threads the bilayer; it reads WVLLVALSVLFLSGRAGALTE. In terms of domain architecture, J spans 33–108; the sequence is VCYDVLGVSR…ETRKDYDYML (76 aa). The next 2 membrane-spanning stretches (helical) occupy residues 134–154 and 228–248; these read IVILVSVCAVSIFQYYSWWSS and ILLFQIILFPYYMFKYISWYV.

This sequence belongs to the DNAJC25 family.

Its subcellular location is the membrane. This Xenopus laevis (African clawed frog) protein is DnaJ homolog subfamily C member 25 (dnajc25).